Here is a 435-residue protein sequence, read N- to C-terminus: Phospholipase A1 EG1, chloroplastic/mitochondrial (435 aa).

The N-terminal 31 residues, methionine 1–glycine 31, are a transit peptide targeting the chloroplast and mitochondrion. A GXSXG motif is present at residues glycine 264–glycine 268. Catalysis depends on serine 266, which acts as the Acyl-ester intermediate. Residues aspartate 324 and histidine 371 each act as charge relay system in the active site.

The protein belongs to the AB hydrolase superfamily. Lipase family.

Its subcellular location is the mitochondrion. The protein localises to the plastid. It localises to the chloroplast. It catalyses the reaction a 1,2-diacyl-sn-glycero-3-phosphocholine + H2O = a 2-acyl-sn-glycero-3-phosphocholine + a fatty acid + H(+). In terms of biological role, phospholipase that releases free fatty acids from phospholipids. Catalyzes the initial step of jasmonate (JA) biosynthesis. Required for the biosynthesis of endogenous JA in seedling, inflorescence and spikelets. Not essential for JA biosynthesis after wounding. Mediates spikelet development and specification of empty-glume identity. Functions in a high temperature-dependent manner to maintain floral developmental robustness under heat stress conditions. Functions by safeguarding the expression of several floral identity genes, such as MADS1, MADS6 and G1. This Oryza sativa subsp. indica (Rice) protein is Phospholipase A1 EG1, chloroplastic/mitochondrial.